Consider the following 740-residue polypeptide: ATP-dependent RNA helicase DBP4 (740 aa).

Residues 1 to 37 (MKKRADPRKIKREEHKQKLSKLQERVDNFGEDEADKE) are disordered. Positions 7-28 (PRKIKREEHKQKLSKLQERVDN) are enriched in basic and acidic residues. Residues 39-67 (SKFEELPLSEATIEGLKNSHYVTCTDVQK) carry the Q motif motif. Residues 70-244 (IPPALQGHDL…RLSLADPKYI (175 aa)) form the Helicase ATP-binding domain. An ATP-binding site is contributed by 83 to 90 (ARTGSGKT). Positions 192–195 (DEAD) match the DEAD box motif. The Helicase C-terminal domain maps to 257-421 (NLEQNYVCVE…TIRPNKKKSI (165 aa)). The disordered stretch occupies residues 565–740 (RQDHNLESDD…ESLTSKLLKK (176 aa)). Positions 636 to 662 (QVKEFVDRETKDMEEADVGDKELVKQK) are enriched in basic and acidic residues. Composition is skewed to acidic residues over residues 680–695 (DEYD…SEEE) and 709–731 (SSDE…EDLE).

The protein belongs to the DEAD box helicase family. DDX10/DBP4 subfamily. Interacts with the U3 and U14 snoRNAs. Associates with pre-ribosomal complexes.

Its subcellular location is the nucleus. The protein resides in the nucleolus. It carries out the reaction ATP + H2O = ADP + phosphate + H(+). In terms of biological role, ATP-dependent RNA helicase required for ribosome biogenesis. Involved in the release of U14 snoRNA in pre-ribosomal complexes. Required for pre-rRNA cleavage at site A2. In Yarrowia lipolytica (strain CLIB 122 / E 150) (Yeast), this protein is ATP-dependent RNA helicase DBP4 (DBP4).